We begin with the raw amino-acid sequence, 318 residues long: tRNA uridine(34) hydroxylase (318 aa).

Positions 123-217 constitute a Rhodanese domain; it reads EDDDTVIIDA…YGKDPETKGQ (95 aa). The active-site Cysteine persulfide intermediate is the C177.

It belongs to the TrhO family.

The enzyme catalyses uridine(34) in tRNA + AH2 + O2 = 5-hydroxyuridine(34) in tRNA + A + H2O. In terms of biological role, catalyzes oxygen-dependent 5-hydroxyuridine (ho5U) modification at position 34 in tRNAs. The sequence is that of tRNA uridine(34) hydroxylase from Staphylococcus aureus (strain MRSA252).